A 642-amino-acid polypeptide reads, in one-letter code: Kelch-like protein 17 (642 aa).

Residues 1 to 53 are disordered; it reads MQPRSERPAGRTQSPEHGSPGPGPEAPPPPPPQPPAPEAERTRPRQARPAAPM. Pro residues predominate over residues 21 to 37; it reads GPGPEAPPPPPPQPPAP. The BTB domain maps to 92–159; it reads CDIVLHVAAK…AYTAEIVVGE (68 aa). Residues 194–296 form the BACK domain; sequence CLGIRGFADA…SRDFLLGHVD (103 aa). The interval 289–641 is interaction with F-actin; it reads DFLLGHVDAE…SPTLSVSSTS (353 aa). Kelch repeat units follow at residues 343–389, 390–436, 438–483, 484–530, 532–577, and 578–624; these read VLFA…AVGN, RLYA…ALHG, LYSA…TLDG, NLYA…VLEG, LYVA…AMDG, and WLYA…VLEL. Residues 640–642 form an interaction with PDZK1 region; it reads TSL.

As to quaternary structure, interacts with F-actin; the interaction disrupts the F-actin structures and leads to marked changes of neuronal morphology. Component of a complex, composed of PDZK1, SYNGAP1, KLHL17 and NMDA receptors. Interacts directly with PDZK1 (via PDZ1 domain); the interaction is important for integrity of actin cytoskeleton structures in neurons. Interacts with DLG4 and SYNGAP1. Interacts (via kelch repeats) with GRIK2 (via C-terminus); the interaction targets GRIK2 for degradation via ubiquitin-proteasome pathway. Interacts with GRIK1. Interacts with (via BTB domain) CUL3; the interaction regulates surface GRIK2 expression.

The protein localises to the postsynaptic density. It localises to the synapse. It participates in protein modification; protein ubiquitination. In terms of biological role, substrate-recognition component of some cullin-RING-based BCR (BTB-CUL3-RBX1) E3 ubiquitin-protein ligase complexes. The BCR(KLHL17) complex mediates the ubiquitination and subsequent degradation of GLUR6. May play a role in the actin-based neuronal function. In Homo sapiens (Human), this protein is Kelch-like protein 17 (KLHL17).